Here is a 156-residue protein sequence, read N- to C-terminus: Small ribosomal subunit protein uS7 (156 aa).

The protein belongs to the universal ribosomal protein uS7 family. As to quaternary structure, part of the 30S ribosomal subunit. Contacts proteins S9 and S11.

Functionally, one of the primary rRNA binding proteins, it binds directly to 16S rRNA where it nucleates assembly of the head domain of the 30S subunit. Is located at the subunit interface close to the decoding center, probably blocks exit of the E-site tRNA. The protein is Small ribosomal subunit protein uS7 of Micrococcus luteus (strain ATCC 4698 / DSM 20030 / JCM 1464 / CCM 169 / CCUG 5858 / IAM 1056 / NBRC 3333 / NCIMB 9278 / NCTC 2665 / VKM Ac-2230) (Micrococcus lysodeikticus).